The chain runs to 37 residues: U1-theraphotoxin-Hs1b (37 aa).

Intrachain disulfides connect Cys4-Cys18, Cys8-Cys29, and Cys23-Cys34.

As to quaternary structure, form 1 and form 2 may dimerize. As to expression, expressed by the venom gland.

Its subcellular location is the secreted. Functionally, lethal neurotoxin that blocks neuromuscular transmission. Acts cooperatively to potentiate the activity of huwentoxin-I. This Cyriopagopus schmidti (Chinese bird spider) protein is U1-theraphotoxin-Hs1b.